The chain runs to 181 residues: MEEYTREPCPYRIGDDIGSAFAMGLVGGSIFQAFGGYKNAAKGKKLVGMMREVRMRSTLTGVQFAAWGGMFSTIDCCLVAIRKKEDPINSIVSGGLTGALLAIRSGPKVMAGSAILGSVILAMIEGVGLVTTRWMGAMMDPTQPPPEALDDPRSLGQKSQAEPGLDQTRPFGIPTGLPNLS.

3 helical membrane-spanning segments follow: residues Ile-17 to Tyr-37, Gly-61 to Ile-81, and Val-109 to Leu-129. A disordered region spans residues Ala-137–Ser-181.

Belongs to the Tim17/Tim22/Tim23 family.

The protein localises to the mitochondrion inner membrane. Functionally, essential component of the TIM23 complex, a complex that mediates the translocation of transit peptide-containing proteins across the mitochondrial inner membrane. The protein is Probable mitochondrial import inner membrane translocase subunit tim-17B.1 of Caenorhabditis elegans.